We begin with the raw amino-acid sequence, 113 residues long: Cell wall protein PGA59 (113 aa).

Residues 1-18 (MQFSSAIILSAVAGSALA) form the signal peptide. Residues asparagine 22 and asparagine 80 are each glycosylated (N-linked (GlcNAc...) asparagine). Glycine 92 is lipidated: GPI-anchor amidated glycine. Positions 93–113 (AAAANAVPAVAAGLLALGAFM) are cleaved as a propeptide — removed in mature form.

The protein belongs to the HWP1 family. Post-translationally, N- and O-glycosylated. In terms of processing, the GPI-anchor is attached to the protein in the endoplasmic reticulum and serves to target the protein to the cell surface. There, the glucosamine-inositol phospholipid moiety is cleaved off and the GPI-modified mannoprotein is covalently attached via its lipidless GPI glycan remnant to the 1,6-beta-glucan of the outer cell wall layer.

The protein resides in the secreted. Its subcellular location is the cell wall. The protein localises to the membrane. Functionally, cell wall protein necessary for cell wall integrity. Plays only a minor role in hyphal morphogenesis and is not critical to biofilm formation. This chain is Cell wall protein PGA59 (PGA59), found in Candida albicans (strain SC5314 / ATCC MYA-2876) (Yeast).